Reading from the N-terminus, the 43-residue chain is Protein PsbN (43 aa).

The helical transmembrane segment at 5 to 27 (NLVTISISCLLVSLTGYAIYTSF) threads the bilayer.

This sequence belongs to the PsbN family.

It localises to the plastid. The protein localises to the chloroplast thylakoid membrane. In terms of biological role, may play a role in photosystem I and II biogenesis. In Gnetum gnemon (Spanish joint-fir), this protein is Protein PsbN.